The chain runs to 401 residues: Ureide permease 4 (401 aa).

The Extracellular portion of the chain corresponds to 1–10 (MYVVESKAGA). The chain crosses the membrane as a helical span at residues 11–31 (IGCMILSLCCLGSWPAILTLL). Topologically, residues 32–40 (ERRGRLPQH) are cytoplasmic. Residues 41–61 (TFLDFATANLLAAIVIAFSLG) form a helical membrane-spanning segment. Residues 62-81 (EIGKSTFLKPDFTTQLPQDN) are Extracellular-facing. The chain crosses the membrane as a helical span at residues 82–102 (WPSVLLAVAGGVLLSIGNLAT). Topologically, residues 103–104 (QY) are cytoplasmic. The helical transmembrane segment at 105–125 (AFAFVGLSVTEVITASITVVI) threads the bilayer. Residues 126-141 (GTTLNYFLDNKINKAE) are Extracellular-facing. Residues 142 to 162 (ILFPGVGCFLIAVFLGAAVHA) form a helical membrane-spanning segment. Residues 163 to 231 (SNAADVKEKL…KRAIKVFGKS (69 aa)) lie on the Cytoplasmic side of the membrane. 224–231 (AIKVFGKS) contributes to the ATP binding site. The chain crosses the membrane as a helical span at residues 232-252 (IMIGLFITLFAGISLSLFSPA). Residues 253 to 275 (FNLATNDQWSTLPKGVPKLVVYT) lie on the Extracellular side of the membrane. The helical transmembrane segment at 276–296 (AFFYFSIAGFLISLILNLIFL) threads the bilayer. Over 297-318 (YRPMVGLARSSLKKYIYDSKGR) the chain is Cytoplasmic. Residues 319 to 339 (GWAVFAGFLCGFGNGLQFMGG) traverse the membrane as a helical segment. Topologically, residues 340–344 (QAAGY) are extracellular. A helical membrane pass occupies residues 345 to 365 (AAADSVQALPLVSTFWGIVLF). The Cytoplasmic portion of the chain corresponds to 366 to 374 (GEYRKSSKR). Residues 375 to 395 (TYALLVSMLAMFVAAVAILMA) form a helical membrane-spanning segment. Topologically, residues 396-401 (SSGHRK) are extracellular.

Belongs to the plant ureide permease (TC 2.A.7.19) family. In terms of tissue distribution, expressed in developing seedlings, flower filaments and stigma, and the top and bottom parts of carpels in siliques.

It localises to the membrane. Proton-coupled transporter that transports a wide spectrum of oxo derivatives of heterocyclic nitrogen compounds. The sequence is that of Ureide permease 4 from Arabidopsis thaliana (Mouse-ear cress).